The sequence spans 333 residues: Casein kinase II subunit alpha-3 (333 aa).

One can recognise a Protein kinase domain in the interval 34–319 (YEVVRKVGRG…AREAMDHPYF (286 aa)). Residues 40-48 (VGRGKYSEV) and Lys-63 contribute to the ATP site. Asp-151 acts as the Proton acceptor in catalysis.

This sequence belongs to the protein kinase superfamily. Ser/Thr protein kinase family. CK2 subfamily. In terms of assembly, heterotetramer of two catalytic alpha subunits and two regulatory beta subunits.

The protein localises to the nucleus. The protein resides in the nucleolus. It localises to the cytoplasm. It catalyses the reaction L-seryl-[protein] + ATP = O-phospho-L-seryl-[protein] + ADP + H(+). The enzyme catalyses L-threonyl-[protein] + ATP = O-phospho-L-threonyl-[protein] + ADP + H(+). In terms of biological role, casein kinases are operationally defined by their preferential utilization of acidic proteins such as caseins as substrates. The alpha chain contains the catalytic site. The tetrameric holoenzyme CK2 is composed of two alpha and two beta subunits. Acts as a circadian clock component that maintains the correct period length through phosphorylation of CCA1. This chain is Casein kinase II subunit alpha-3, found in Arabidopsis thaliana (Mouse-ear cress).